A 160-amino-acid polypeptide reads, in one-letter code: Cyanate hydratase (160 aa).

Catalysis depends on residues Arg100, Glu103, and Ser126.

This sequence belongs to the cyanase family.

It catalyses the reaction cyanate + hydrogencarbonate + 3 H(+) = NH4(+) + 2 CO2. In terms of biological role, catalyzes the reaction of cyanate with bicarbonate to produce ammonia and carbon dioxide. This is Cyanate hydratase from Aspergillus flavus (strain ATCC 200026 / FGSC A1120 / IAM 13836 / NRRL 3357 / JCM 12722 / SRRC 167).